We begin with the raw amino-acid sequence, 153 residues long: Ribonuclease 2 (153 aa).

The protein belongs to the BetVI family.

The protein localises to the cytoplasm. Catalyzes the two-stage endonucleolytic cleavage to 3'-phosphomononucleotides and 3'-phosphooligonucleotides with 2',3'-cyclic phosphate intermediates. In Panax ginseng (Korean ginseng), this protein is Ribonuclease 2.